The chain runs to 91 residues: Small ribosomal subunit protein uS19 (91 aa).

Belongs to the universal ribosomal protein uS19 family.

Protein S19 forms a complex with S13 that binds strongly to the 16S ribosomal RNA. This Fusobacterium nucleatum subsp. nucleatum (strain ATCC 25586 / DSM 15643 / BCRC 10681 / CIP 101130 / JCM 8532 / KCTC 2640 / LMG 13131 / VPI 4355) protein is Small ribosomal subunit protein uS19.